The chain runs to 350 residues: HTH-type DNA-binding transcriptional activator EutR (350 aa).

The region spanning 243–344 is the HTH araC/xylS-type domain; that stretch reads SRAREYVLEN…AEKPSLTLHQ (102 aa). DNA-binding regions (H-T-H motif) lie at residues 260–281 and 311–334; these read LDLC…HAIL and VKDA…QQLF.

The protein operates within amine and polyamine degradation; ethanolamine degradation. Functionally, activates the transcription of the eut operon, allowing utilization of ethanolamine (EA). Positively regulates its own transcription. Probably binds EA and vitamin B12 as effectors. Competes with ethanolamine ammonia-lysase (EAL, the first enzyme in the EA degradation pathway) for adenosylcobalamin. Ethanolamine-associated signaling mediated via this protein, but not EA degradation, impacts S.typhimurium survival within macrophages. Binds the promoter of ssrB and eutS in vitro; in mouse infection models binding to ssrB probably induces all 4 operons of pathogenicity island SPI-2. Its function is as follows. Expression of the eut operon allows this bacteria to use ethanolamine (EA) as a carbon, nitrogen and energy source. It relies on cobalamin (vitamin B12) both as a cofactor for the ethanolamine ammonia-lyase (EAL) activity and to induce the operon. EA enhances bacterial survival in macrophages in a concentration-dependent manner, suggesting it is an important nutrient in infection. The chain is HTH-type DNA-binding transcriptional activator EutR from Salmonella typhimurium (strain LT2 / SGSC1412 / ATCC 700720).